Reading from the N-terminus, the 369-residue chain is MLTDHTIKFNKLLTPFSFLYGIGVRFRNQLFDWKVLRTERYDLPIICVGNLTVGGTGKTPHTEYIIRLIKDRYRVAVLSRGYKRKTSGFLLADQRSTSKDIGDEPYQMKRKFPDILVAVDADRRRGIRNLLALPENKRPDVIVLDDAFQHRYVAPTLNILLTDCHRLYTQDRLLPAGRLREPMDGARRADVIIVTKCESCIQPIDFRIIEEDIHLSAYQELYFSRILYGELEPVFSGKAPRRTLKGLASTTEVLLVSGIASPAPLEKEIHKYTEHVTSLIFPDHHAFDRHDIQKIQTAFKRLTSTSKLIIITEKDAARLRDLPSLPMEWFSHLYCLPITVGFCMDREKQFQELIVKHIDTRIKNHPILR.

52 to 59 (TVGGTGKT) is an ATP binding site.

It belongs to the LpxK family.

The catalysed reaction is a lipid A disaccharide + ATP = a lipid IVA + ADP + H(+). It participates in glycolipid biosynthesis; lipid IV(A) biosynthesis; lipid IV(A) from (3R)-3-hydroxytetradecanoyl-[acyl-carrier-protein] and UDP-N-acetyl-alpha-D-glucosamine: step 6/6. In terms of biological role, transfers the gamma-phosphate of ATP to the 4'-position of a tetraacyldisaccharide 1-phosphate intermediate (termed DS-1-P) to form tetraacyldisaccharide 1,4'-bis-phosphate (lipid IVA). This is Tetraacyldisaccharide 4'-kinase from Parabacteroides distasonis (strain ATCC 8503 / DSM 20701 / CIP 104284 / JCM 5825 / NCTC 11152).